The sequence spans 321 residues: Ribosomal RNA small subunit methyltransferase H (321 aa).

Residues 33–35, aspartate 58, phenylalanine 85, aspartate 111, and glutamine 118 each bind S-adenosyl-L-methionine; that span reads AGH.

This sequence belongs to the methyltransferase superfamily. RsmH family.

It localises to the cytoplasm. It catalyses the reaction cytidine(1402) in 16S rRNA + S-adenosyl-L-methionine = N(4)-methylcytidine(1402) in 16S rRNA + S-adenosyl-L-homocysteine + H(+). Functionally, specifically methylates the N4 position of cytidine in position 1402 (C1402) of 16S rRNA. In Chloroherpeton thalassium (strain ATCC 35110 / GB-78), this protein is Ribosomal RNA small subunit methyltransferase H.